Reading from the N-terminus, the 426-residue chain is Histidine--tRNA ligase (426 aa).

Belongs to the class-II aminoacyl-tRNA synthetase family. As to quaternary structure, homodimer.

It localises to the cytoplasm. The enzyme catalyses tRNA(His) + L-histidine + ATP = L-histidyl-tRNA(His) + AMP + diphosphate + H(+). The chain is Histidine--tRNA ligase from Streptococcus pyogenes serotype M6 (strain ATCC BAA-946 / MGAS10394).